Here is a 543-residue protein sequence, read N- to C-terminus: Periplasmic oligopeptide-binding protein OppA (543 aa).

Positions 1-26 (MSNITKKSLIAAGILTALIAASAATA) are cleaved as a signal peptide. An intrachain disulfide couples C297 to C443.

This sequence belongs to the bacterial solute-binding protein 5 family. As to quaternary structure, the complex is composed of two ATP-binding proteins (OppD and OppF), two transmembrane proteins (OppB and OppC) and a solute-binding protein (OppA).

The protein localises to the periplasm. Part of the ABC transporter complex OppABCDF involved in the uptake of oligopeptides, including the cell wall murein tripeptide L-alanyl-gamma-D-glutamyl-meso-diaminopimelate. Plays an important nutritional role and is involved in the recycling of cell wall peptides. Binds peptides containing from two to five amino acid residues regardless of their sequence. Also binds cell wall peptides, such as L-alanyl-gamma-D-glutamyl-meso-diaminopimelate. The polypeptide is Periplasmic oligopeptide-binding protein OppA (Salmonella typhimurium (strain LT2 / SGSC1412 / ATCC 700720)).